A 607-amino-acid polypeptide reads, in one-letter code: DNA polymerase (607 aa).

The 3'-5' exonuclease domain maps to methionine 1 to aspartate 213. The interval valine 214 to tyrosine 607 is polymerase.

This sequence belongs to the DNA polymerase type-A family.

It carries out the reaction DNA(n) + a 2'-deoxyribonucleoside 5'-triphosphate = DNA(n+1) + diphosphate. Its function is as follows. Replicates viral genomic DNA. This polymerase possesses two enzymatic activities: DNA synthesis (polymerase) and an exonucleolytic activity that degrades single-stranded DNA in the 3'-5' direction. The sequence is that of DNA polymerase (44) from Mycobacterium phage D29 (Mycobacteriophage D29).